The sequence spans 88 residues: Small ribosomal subunit protein uS15 (88 aa).

The protein belongs to the universal ribosomal protein uS15 family. In terms of assembly, part of the 30S ribosomal subunit. Forms a bridge to the 50S subunit in the 70S ribosome, contacting the 23S rRNA.

Functionally, one of the primary rRNA binding proteins, it binds directly to 16S rRNA where it helps nucleate assembly of the platform of the 30S subunit by binding and bridging several RNA helices of the 16S rRNA. Forms an intersubunit bridge (bridge B4) with the 23S rRNA of the 50S subunit in the ribosome. The polypeptide is Small ribosomal subunit protein uS15 (Mesomycoplasma flocculare (Mycoplasma flocculare)).